Reading from the N-terminus, the 362-residue chain is Heat-inducible transcription repressor HrcA (362 aa).

This sequence belongs to the HrcA family.

Functionally, negative regulator of class I heat shock genes (grpE-dnaK-dnaJ and groELS operons). Prevents heat-shock induction of these operons. The protein is Heat-inducible transcription repressor HrcA of Nitrobacter hamburgensis (strain DSM 10229 / NCIMB 13809 / X14).